The chain runs to 2256 residues: Death-inducer obliterator 1 (2256 aa).

N-acetylmethionine is present on methionine 1. Positions 1–25 (MDDKGHLSNEEAPKAIKPTSKEFRK) are enriched in basic and acidic residues. Positions 1-256 (MDDKGHLSNE…NPREAGKPKP (256 aa)) are disordered. Polar residues-rich tracts occupy residues 48 to 59 (SEQQPQQHNLSL) and 96 to 119 (EPTSSTVTDVETASEGSVESSSEI). Phosphoserine occurs at positions 58 and 112. The segment covering 128 to 142 (LGKEHPASSEKAKGG) has biased composition (basic and acidic residues). Residues 143–153 (EEEEDTSDSDS) are compositionally biased toward acidic residues. Residue threonine 148 is modified to Phosphothreonine. Phosphoserine occurs at positions 149 and 151. 2 short sequence motifs (nuclear localization signal) span residues 162–170 (QNRLRRKRE) and 182–190 (QNRLRKKRR). Residues 169–178 (REQEPVERSL) show a composition bias toward basic and acidic residues. Composition is skewed to basic and acidic residues over residues 206–216 (EQDRPLCKQEP) and 246–256 (ENPREAGKPKP). The segment at 265-319 (ALYCICRQPHNNRFMICCDRCEEWFHGDCVGISEARGRLLERNGEDYICPNCTIL) adopts a PHD-type zinc-finger fold. 7 disordered regions span residues 481–535 (LASR…DDRR), 598–624 (RPWPSATLSGTSARQAGPTPMTAASKK), 641–668 (ANVPAASPAPGRLGPVSPAPSQPNSQIR), 778–822 (SRTK…PEKS), 856–970 (QVPS…TALS), 1011–1039 (AKPSSSPDPRYLSVPPSPSISESRSPPEG), and 1197–1218 (PSSAGELDKTDEKRTRLQQEEL). Over residues 495-506 (ESSTPSWASDHN) the composition is skewed to polar residues. Phosphoserine is present on serine 522. The region spanning 667–787 (IRQNIRRSLK…SRTKLLNESK (121 aa)) is the TFIIS central domain. A compositionally biased stretch (basic and acidic residues) spans 778–788 (SRTKLLNESKK). Acidic residues predominate over residues 797-812 (PDMEDSPPVSDSEEQQ). 2 positions are modified to phosphoserine: serine 802 and serine 806. Composition is skewed to basic and acidic residues over residues 875–886 (SKKEDFKPRHDS) and 921–935 (QERKCFPESPGDSHP). Residue lysine 876 forms a Glycyl lysine isopeptide (Lys-Gly) (interchain with G-Cter in SUMO2) linkage. Serine 886 carries the phosphoserine modification. The segment covering 937–962 (PSSLGGLSPSSASGGSGVVTTVTMSG) has biased composition (low complexity). Residues serine 1016, serine 1027, and serine 1035 each carry the phosphoserine modification. Positions 1202-1215 (ELDKTDEKRTRLQQ) are enriched in basic and acidic residues. Residue tyrosine 1239 is modified to Phosphotyrosine. A disordered region spans residues 1245 to 1288 (DTAATSTTPPGSPPPPPPLPEPPVLKILSSLKPGSTSTVTAPTT). Threonine 1252 is subject to Phosphothreonine. Residues 1254-1267 (PGSPPPPPPLPEPP) show a composition bias toward pro residues. A Phosphoserine modification is found at serine 1256. Low complexity predominate over residues 1279–1288 (STSTVTAPTT). Phosphoserine is present on serine 1307. Disordered regions lie at residues 1320-1347 (KKSFEPSGKESVGSTLSPHQDSKAKGED), 1362-1421 (FGQF…VAYD), 1509-1609 (SDAL…EAKE), and 1630-2256 (QKCE…AAQA). Over residues 1371–1387 (LEEEEEDDRPYDPEEEY) the composition is skewed to acidic residues. A Phosphoserine modification is found at serine 1514. A compositionally biased stretch (polar residues) spans 1526 to 1546 (LFSQEQQAPDPSQGAPNTNHN). Positions 1547–1557 (LDSRQSRDPRQ) are enriched in basic and acidic residues. The span at 1649–1666 (PTAGDGAARPAPPRRVLL) shows a compositional bias: low complexity. Over residues 1667–1679 (PTPPSTTFPPSFP) the composition is skewed to pro residues. Residues 1699 to 1712 (TFMSQETSLGSSQY) are compositionally biased toward polar residues. Residue serine 1726 is modified to Phosphoserine. A compositionally biased stretch (pro residues) spans 1783 to 1792 (FPGPRGPVPP). Position 1848 is an omega-N-methylarginine (arginine 1848). Basic and acidic residues predominate over residues 1855–1869 (FEDRKDPHGEKREFQ). Arginine 1904, arginine 1905, arginine 1988, arginine 1993, arginine 2004, arginine 2019, and arginine 2035 each carry asymmetric dimethylarginine. Composition is skewed to basic and acidic residues over residues 2081 to 2113 (EFREGKGHEYRSPAFEGRQRERFEAGSKEKPLD) and 2123 to 2246 (RQGR…EART).

Interacts specifically (via PHD-type zinc finger) with histone H3 that is trimethylated at 'Lys-4' (H3K4me3), histone phosphorylation at 'Thr-3' or 'Thr-6' disrupts this binding and promotes translocation of DIDO1 from chromatin to the mitotic spindle during mitosis. In terms of tissue distribution, ubiquitous. Expressed at intermediate levels.

It localises to the cytoplasm. The protein localises to the nucleus. It is found in the cytoskeleton. Its subcellular location is the spindle. In terms of biological role, required for early embryonic stem cell development. Putative transcription factor, weakly pro-apoptotic when overexpressed. The sequence is that of Death-inducer obliterator 1 (Dido1) from Mus musculus (Mouse).